A 76-amino-acid chain; its full sequence is MKLLLLLLTVTLLLAQVTPVTKCWGKSGRCRTTCKKSEVYYILCKTEAKCCVDPKYVPVRSKLTDTNTSLESTSAV.

Positions 1–15 are cleaved as a signal peptide; that stretch reads MKLLLLLLTVTLLLA. Intrachain disulfides connect Cys23–Cys50, Cys30–Cys44, and Cys34–Cys51.

Belongs to the beta-defensin family. Abundant expression in the male reproductive tract only.

The protein resides in the secreted. Functionally, has antibacterial activity. The sequence is that of Beta-defensin 121 (DEFB121) from Macaca mulatta (Rhesus macaque).